We begin with the raw amino-acid sequence, 84 residues long: Hepcidin (84 aa).

An N-terminal signal peptide occupies residues 1-24 (MALSSQIWAACLLLLLLLASLTSG). Residues 25-54 (SVFPQQTGQLAELQPQDRAGARAGWTPMLQ) constitute a propeptide that is removed on maturation. Intrachain disulfides connect Cys69-Cys72, Cys70-Cys78, and Cys73-Cys81.

It belongs to the hepcidin family. As to quaternary structure, interacts with SLC40A1; this interaction promotes SLC40A1 rapid ubiquitination.

The protein localises to the secreted. Liver-produced hormone that constitutes the main circulating regulator of iron absorption and distribution across tissues. Acts by promoting endocytosis and degradation of ferroportin/SLC40A1, leading to the retention of iron in iron-exporting cells and decreased flow of iron into plasma. Controls the major flows of iron into plasma: absorption of dietary iron in the intestine, recycling of iron by macrophages, which phagocytose old erythrocytes and other cells, and mobilization of stored iron from hepatocytes. In terms of biological role, has strong antimicrobial activity against E.coli ML35P N.cinerea and weaker against S.epidermidis, S.aureus and group b streptococcus bacteria. Active against the fungus C.albicans. No activity against P.aeruginosa. The protein is Hepcidin (HAMP) of Pongo abelii (Sumatran orangutan).